A 368-amino-acid chain; its full sequence is Chaperone protein DnaJ (368 aa).

The J domain occupies 5 to 70 (DYYQVLGVPR…KKRKLYDTHG (66 aa)). A CR-type zinc finger spans residues 124 to 201 (GVERQIQIPT…CNGAGRVEDH (78 aa)). Zn(2+)-binding residues include Cys137, Cys140, Cys153, Cys156, Cys175, Cys178, Cys189, and Cys192. CXXCXGXG motif repeat units follow at residues 137–144 (CTHCNGSG), 153–160 (CGTCRGSG), 175–182 (CPHCGGRG), and 189–196 (CKVCNGAG).

The protein belongs to the DnaJ family. Homodimer. It depends on Zn(2+) as a cofactor.

The protein resides in the cytoplasm. Participates actively in the response to hyperosmotic and heat shock by preventing the aggregation of stress-denatured proteins and by disaggregating proteins, also in an autonomous, DnaK-independent fashion. Unfolded proteins bind initially to DnaJ; upon interaction with the DnaJ-bound protein, DnaK hydrolyzes its bound ATP, resulting in the formation of a stable complex. GrpE releases ADP from DnaK; ATP binding to DnaK triggers the release of the substrate protein, thus completing the reaction cycle. Several rounds of ATP-dependent interactions between DnaJ, DnaK and GrpE are required for fully efficient folding. Also involved, together with DnaK and GrpE, in the DNA replication of plasmids through activation of initiation proteins. This Xylella fastidiosa (strain M12) protein is Chaperone protein DnaJ.